The following is a 509-amino-acid chain: tRNA (guanine(37)-N(1))-methyltransferase (509 aa).

The transit peptide at 1–57 directs the protein to the mitochondrion; the sequence is MVLWILWRPFGFSRRLLKLERHSITESKSLIPLAWTSLTQTLSESPGIFLLGQRKRF. S-adenosyl-L-methionine contacts are provided by residues His289, 327 to 328, 355 to 356, and Asn387; these read DL and DG. Positions 478–509 are disordered; that stretch reads TKNPENHEDPPLKRQRTAEAFSDEKTQIASNT.

This sequence belongs to the class I-like SAM-binding methyltransferase superfamily. TRM5/TYW2 family. Monomer.

Its subcellular location is the mitochondrion matrix. The protein resides in the nucleus. The protein localises to the cytoplasm. The catalysed reaction is guanosine(37) in tRNA + S-adenosyl-L-methionine = N(1)-methylguanosine(37) in tRNA + S-adenosyl-L-homocysteine + H(+). In terms of biological role, involved in mitochondrial tRNA methylation. Specifically methylates the N1 position of guanosine-37 in various tRNAs. Methylation is not dependent on the nature of the nucleoside 5' of the target nucleoside. This is the first step in the biosynthesis of wybutosine (yW), a modified base adjacent to the anticodon of tRNAs and required for accurate decoding. The polypeptide is tRNA (guanine(37)-N(1))-methyltransferase (Macaca fascicularis (Crab-eating macaque)).